The chain runs to 669 residues: DNA mismatch repair protein MutL (669 aa).

Residues 361–409 are disordered; it reads ENVFSQPYQAPVTSSTQKKSTGAYQGSAGKGLTDTQKSPQKTLDTRQFG. 2 stretches are compositionally biased toward polar residues: residues 363-384 and 393-402; these read VFSQ…TGAY and TDTQKSPQKT.

This sequence belongs to the DNA mismatch repair MutL/HexB family.

This protein is involved in the repair of mismatches in DNA. It is required for dam-dependent methyl-directed DNA mismatch repair. May act as a 'molecular matchmaker', a protein that promotes the formation of a stable complex between two or more DNA-binding proteins in an ATP-dependent manner without itself being part of a final effector complex. This chain is DNA mismatch repair protein MutL, found in Proteus mirabilis (strain HI4320).